A 200-amino-acid chain; its full sequence is dITP/XTP pyrophosphatase (200 aa).

7-12 (TSNKHK) contributes to the substrate binding site. Mg(2+) contacts are provided by Glu-38 and Asp-73. Asp-73 acts as the Proton acceptor in catalysis. Residues Ser-74, 154–157 (FGYD), Lys-177, and 182–183 (HR) contribute to the substrate site.

The protein belongs to the HAM1 NTPase family. Homodimer. Requires Mg(2+) as cofactor.

The enzyme catalyses XTP + H2O = XMP + diphosphate + H(+). It catalyses the reaction dITP + H2O = dIMP + diphosphate + H(+). The catalysed reaction is ITP + H2O = IMP + diphosphate + H(+). Pyrophosphatase that catalyzes the hydrolysis of nucleoside triphosphates to their monophosphate derivatives, with a high preference for the non-canonical purine nucleotides XTP (xanthosine triphosphate), dITP (deoxyinosine triphosphate) and ITP. Seems to function as a house-cleaning enzyme that removes non-canonical purine nucleotides from the nucleotide pool, thus preventing their incorporation into DNA/RNA and avoiding chromosomal lesions. The sequence is that of dITP/XTP pyrophosphatase from Campylobacter jejuni subsp. jejuni serotype O:2 (strain ATCC 700819 / NCTC 11168).